The sequence spans 417 residues: UDP-N-acetylglucosamine 1-carboxyvinyltransferase (417 aa).

Position 22–23 (22–23 (KN)) interacts with phosphoenolpyruvate. R93 is a UDP-N-acetyl-alpha-D-glucosamine binding site. Residue C117 is the Proton donor of the active site. The residue at position 117 (C117) is a 2-(S-cysteinyl)pyruvic acid O-phosphothioketal. UDP-N-acetyl-alpha-D-glucosamine is bound by residues 122-126 (RPVDQ), D305, and I327.

Belongs to the EPSP synthase family. MurA subfamily.

It is found in the cytoplasm. The catalysed reaction is phosphoenolpyruvate + UDP-N-acetyl-alpha-D-glucosamine = UDP-N-acetyl-3-O-(1-carboxyvinyl)-alpha-D-glucosamine + phosphate. It participates in cell wall biogenesis; peptidoglycan biosynthesis. Functionally, cell wall formation. Adds enolpyruvyl to UDP-N-acetylglucosamine. The protein is UDP-N-acetylglucosamine 1-carboxyvinyltransferase of Chromobacterium violaceum (strain ATCC 12472 / DSM 30191 / JCM 1249 / CCUG 213 / NBRC 12614 / NCIMB 9131 / NCTC 9757 / MK).